Here is a 102-residue protein sequence, read N- to C-terminus: Iron-sulfur cluster assembly protein CyaY (102 aa).

The protein belongs to the frataxin family.

In terms of biological role, involved in iron-sulfur (Fe-S) cluster assembly. May act as a regulator of Fe-S biogenesis. The sequence is that of Iron-sulfur cluster assembly protein CyaY from Actinobacillus succinogenes (strain ATCC 55618 / DSM 22257 / CCUG 43843 / 130Z).